The chain runs to 741 residues: Catalase-peroxidase (741 aa).

An N-terminal signal peptide occupies residues methionine 1–alanine 23. Positions tryptophan 102–tyrosine 223 form a cross-link, tryptophyl-tyrosyl-methioninium (Trp-Tyr) (with M-249). Histidine 103 serves as the catalytic Proton acceptor. A cross-link (tryptophyl-tyrosyl-methioninium (Tyr-Met) (with W-102)) is located at residues tyrosine 223–methionine 249. A heme b-binding site is contributed by histidine 264.

The protein belongs to the peroxidase family. Peroxidase/catalase subfamily. Homodimer or homotetramer. Heme b is required as a cofactor. Formation of the three residue Trp-Tyr-Met cross-link is important for the catalase, but not the peroxidase activity of the enzyme.

The catalysed reaction is H2O2 + AH2 = A + 2 H2O. It catalyses the reaction 2 H2O2 = O2 + 2 H2O. Its function is as follows. Bifunctional enzyme with both catalase and broad-spectrum peroxidase activity. The polypeptide is Catalase-peroxidase (Francisella tularensis subsp. tularensis (strain FSC 198)).